The following is a 257-amino-acid chain: uncharacterized protein (257 aa).

The helical transmembrane segment at 6-26 (IFWLNLAAIIIISIVVSGGMF) threads the bilayer.

Belongs to the staphylococcal tandem lipoprotein family.

It is found in the cell membrane. This is an uncharacterized protein from Staphylococcus aureus (strain N315).